Consider the following 125-residue polypeptide: UPF0231 protein HD_1708 (125 aa).

This sequence belongs to the UPF0231 family.

The sequence is that of UPF0231 protein HD_1708 from Haemophilus ducreyi (strain 35000HP / ATCC 700724).